We begin with the raw amino-acid sequence, 674 residues long: Sterile alpha motif domain-containing protein 15 (674 aa).

Acidic residues predominate over residues 1–18 (MAEVPEDYDSGPDEDGEL). A disordered region spans residues 1–448 (MAEVPEDYDS…LEHREPKRGK (448 aa)). 3 stretches are compositionally biased toward basic and acidic residues: residues 87–142 (IAKE…EEAK), 195–223 (ESLRVQHEETGLEPPEQTKQDFPSEKLGE), and 236–274 (TKPETPEETQRESTEKKRTEPPEQARLEFLEKEPRKSSE). A compositionally biased stretch (acidic residues) spans 276 to 290 (AGLEPPEETQPEVPE). 4 stretches are compositionally biased toward basic and acidic residues: residues 291–322 (EMQRKATEEKGTELPERTKPDFPDHKPRKSTD), 330–346 (EEIKLEFPEEESRKTNE), 354–372 (EMMKPESPEEIRKSNEKKN), and 391–429 (VEEKTQTKPTEKILELPDETKPRETHVEFSKEDRPEPIK). Residues 545–608 (WDPEEVAEWI…SRHTQELLEI (64 aa)) enclose the SAM domain.

This Homo sapiens (Human) protein is Sterile alpha motif domain-containing protein 15 (SAMD15).